A 165-amino-acid polypeptide reads, in one-letter code: Large ribosomal subunit protein uL10 (165 aa).

Belongs to the universal ribosomal protein uL10 family. As to quaternary structure, part of the ribosomal stalk of the 50S ribosomal subunit. The N-terminus interacts with L11 and the large rRNA to form the base of the stalk. The C-terminus forms an elongated spine to which L12 dimers bind in a sequential fashion forming a multimeric L10(L12)X complex.

Its function is as follows. Forms part of the ribosomal stalk, playing a central role in the interaction of the ribosome with GTP-bound translation factors. The protein is Large ribosomal subunit protein uL10 of Yersinia pseudotuberculosis serotype IB (strain PB1/+).